A 348-amino-acid polypeptide reads, in one-letter code: Holliday junction branch migration complex subunit RuvB (348 aa).

A disordered region spans residues 1–20 (MKPPARMVSPERRSDDVGDT). Positions 1 to 183 (MKPPARMVSP…FGIPIRLNFY (183 aa)) are large ATPase domain (RuvB-L). ATP-binding positions include leucine 22, arginine 23, glycine 64, lysine 67, threonine 68, threonine 69, 130 to 132 (EDF), arginine 173, tyrosine 183, and arginine 220. Threonine 68 is a Mg(2+) binding site. Positions 184–254 (TVEELEGIVT…IADHALSALE (71 aa)) are small ATPAse domain (RuvB-S). The interval 257 to 348 (AAGLDAMDRR…FGLFGSEDDA (92 aa)) is head domain (RuvB-H). Residues arginine 293, arginine 312, and arginine 317 each coordinate DNA.

It belongs to the RuvB family. As to quaternary structure, homohexamer. Forms an RuvA(8)-RuvB(12)-Holliday junction (HJ) complex. HJ DNA is sandwiched between 2 RuvA tetramers; dsDNA enters through RuvA and exits via RuvB. An RuvB hexamer assembles on each DNA strand where it exits the tetramer. Each RuvB hexamer is contacted by two RuvA subunits (via domain III) on 2 adjacent RuvB subunits; this complex drives branch migration. In the full resolvosome a probable DNA-RuvA(4)-RuvB(12)-RuvC(2) complex forms which resolves the HJ.

The protein localises to the cytoplasm. The enzyme catalyses ATP + H2O = ADP + phosphate + H(+). In terms of biological role, the RuvA-RuvB-RuvC complex processes Holliday junction (HJ) DNA during genetic recombination and DNA repair, while the RuvA-RuvB complex plays an important role in the rescue of blocked DNA replication forks via replication fork reversal (RFR). RuvA specifically binds to HJ cruciform DNA, conferring on it an open structure. The RuvB hexamer acts as an ATP-dependent pump, pulling dsDNA into and through the RuvAB complex. RuvB forms 2 homohexamers on either side of HJ DNA bound by 1 or 2 RuvA tetramers; 4 subunits per hexamer contact DNA at a time. Coordinated motions by a converter formed by DNA-disengaged RuvB subunits stimulates ATP hydrolysis and nucleotide exchange. Immobilization of the converter enables RuvB to convert the ATP-contained energy into a lever motion, pulling 2 nucleotides of DNA out of the RuvA tetramer per ATP hydrolyzed, thus driving DNA branch migration. The RuvB motors rotate together with the DNA substrate, which together with the progressing nucleotide cycle form the mechanistic basis for DNA recombination by continuous HJ branch migration. Branch migration allows RuvC to scan DNA until it finds its consensus sequence, where it cleaves and resolves cruciform DNA. This Bradyrhizobium sp. (strain BTAi1 / ATCC BAA-1182) protein is Holliday junction branch migration complex subunit RuvB.